The chain runs to 411 residues: LL-diaminopimelate aminotransferase (411 aa).

The substrate site is built by tyrosine 15 and glycine 42. Residues tyrosine 72, 105-106 (SK), tyrosine 129, asparagine 186, tyrosine 217, and 245-247 (SFS) each bind pyridoxal 5'-phosphate. Residues lysine 106, tyrosine 129, and asparagine 186 each contribute to the substrate site. Lysine 248 is modified (N6-(pyridoxal phosphate)lysine). The pyridoxal 5'-phosphate site is built by arginine 256 and asparagine 287. Positions 287 and 382 each coordinate substrate.

It belongs to the class-I pyridoxal-phosphate-dependent aminotransferase family. LL-diaminopimelate aminotransferase subfamily. As to quaternary structure, homodimer. It depends on pyridoxal 5'-phosphate as a cofactor.

It catalyses the reaction (2S,6S)-2,6-diaminopimelate + 2-oxoglutarate = (S)-2,3,4,5-tetrahydrodipicolinate + L-glutamate + H2O + H(+). It participates in amino-acid biosynthesis; L-lysine biosynthesis via DAP pathway; LL-2,6-diaminopimelate from (S)-tetrahydrodipicolinate (aminotransferase route): step 1/1. Involved in the synthesis of meso-diaminopimelate (m-DAP or DL-DAP), required for both lysine and peptidoglycan biosynthesis. Catalyzes the direct conversion of tetrahydrodipicolinate to LL-diaminopimelate. Is also able to use meso-diaminopimelate, lysine or ornithine as substrates. This Protochlamydia amoebophila (strain UWE25) protein is LL-diaminopimelate aminotransferase.